Reading from the N-terminus, the 407-residue chain is MRGGLWQLGQSITRRLGQSDKKTIARRCYASEADLKKTVLYDFHVANGGKMVPFAGWSMPIQYKDSIMESTINCRENGSLFDVSHMCGLSLKGKDCVPFLEKLVVADVAGLRPGTGSLTVFTNEKGGAIDDSVITKVTDDHIYLVVNAGCRDKDLAHIEEHMKAFKAKGGDVSWHIYDERSLLALQGPLAGSTLQHLTKEDLSKMYFGDFRIIDINGSKCFLTRTGYTGEDGFEISVPSENAVDLAKAILEKSEGKVRLTGLGARDSLRLEAGLCLYGNDMEQHITPVEAGLTWAIGKRRRAEGGFLGADVILKQIADGPAIRRVGLFSTGPPARSHSEIQNEKGENIGEVTSGGFSPCLKKNIGMGYVKSGLHKPGTKLKIVIRGKTYEGSVTKMPFVPTKYYKPA.

The transit peptide at 1 to 29 directs the protein to the mitochondrion; it reads MRGGLWQLGQSITRRLGQSDKKTIARRCY. Glutamate 234, arginine 265, and tyrosine 403 together coordinate substrate.

It belongs to the GcvT family. In terms of assembly, the glycine cleavage system is composed of four proteins: P, T, L and H.

The protein resides in the mitochondrion. It carries out the reaction N(6)-[(R)-S(8)-aminomethyldihydrolipoyl]-L-lysyl-[protein] + (6S)-5,6,7,8-tetrahydrofolate = N(6)-[(R)-dihydrolipoyl]-L-lysyl-[protein] + (6R)-5,10-methylene-5,6,7,8-tetrahydrofolate + NH4(+). Functionally, the glycine cleavage system catalyzes the degradation of glycine. The protein is Aminomethyltransferase, mitochondrial (GDCST) of Flaveria pringlei.